The primary structure comprises 472 residues: Na(+)/H(+) antiporter NhaA (472 aa).

10 helical membrane passes run 24–44 (ISGLIMLGFALTGLVLANLPA), 66–86 (LPIGHWAQDGLLTIFFLTVGL), 108–128 (LCAVGGMIAPPILFLAVTALF), 156–176 (GWAVPTATDIAFSLAVLALFA), 196–216 (LLAIILIAVFFSSINAWYWFI), 234–254 (VPWIAVGIVGILAWIMMFEAG), 290–310 (PFSALLALPIFALFATGVHFE), 312–332 (MSPLLLASPLVIALIVALVVG), 361–381 (MIPAAVACGIGFTVSFLIASL), and 392–412 (ARFGVLVASLIAAAISGVLLS). Residues 422-472 (AAAAAADEEDDESIDGDGIGQPSHTTEPTTPTEHPGTLADGTASVEIDFRH) form a disordered region. Residues 427–436 (ADEEDDESID) are compositionally biased toward acidic residues. Residues 445 to 456 (HTTEPTTPTEHP) show a composition bias toward low complexity.

This sequence belongs to the NhaA Na(+)/H(+) (TC 2.A.33) antiporter family.

It localises to the cell membrane. It carries out the reaction Na(+)(in) + 2 H(+)(out) = Na(+)(out) + 2 H(+)(in). Functionally, na(+)/H(+) antiporter that extrudes sodium in exchange for external protons. The protein is Na(+)/H(+) antiporter NhaA of Bifidobacterium longum (strain NCC 2705).